The chain runs to 483 residues: Regulatory protein ViaA (483 aa).

This sequence belongs to the ViaA family. Homodimer. Interacts with RavA.

The protein localises to the cytoplasm. Its function is as follows. Component of the RavA-ViaA chaperone complex, which may act on the membrane to optimize the function of some of the respiratory chains. ViaA stimulates the ATPase activity of RavA. This is Regulatory protein ViaA from Shigella boydii serotype 18 (strain CDC 3083-94 / BS512).